Reading from the N-terminus, the 300-residue chain is Tumor necrosis factor receptor superfamily member 6B (300 aa).

The N-terminal stretch at 1–29 is a signal peptide; that stretch reads MRALEGPGLSLLCLVLALPALLPVPAVRG. TNFR-Cys repeat units follow at residues 31-70, 72-113, 115-150, and 152-193; these read AETP…PTTC, PCPP…NRAC, CRTG…NTQC, and PCPP…DTLC. Cystine bridges form between cysteine 49–cysteine 62, cysteine 52–cysteine 70, cysteine 73–cysteine 88, cysteine 91–cysteine 105, cysteine 95–cysteine 113, cysteine 115–cysteine 126, cysteine 132–cysteine 150, and cysteine 153–cysteine 168. Residue asparagine 173 is glycosylated (N-linked (GlcNAc...) asparagine). Cysteines 174 and 193 form a disulfide.

In terms of tissue distribution, detected in fetal lung, brain and liver. Detected in adult stomach, spinal cord, lymph node, trachea, spleen, colon and lung. Highly expressed in several primary tumors from colon, stomach, rectum, esophagus and in SW480 colon carcinoma cells.

It localises to the secreted. Its function is as follows. Decoy receptor that can neutralize the cytotoxic ligands TNFS14/LIGHT, TNFSF15 and TNFSF6/FASL. Protects against apoptosis. The protein is Tumor necrosis factor receptor superfamily member 6B (TNFRSF6B) of Homo sapiens (Human).